The primary structure comprises 163 residues: Probable ribosome biogenesis protein RLP24 (163 aa).

It belongs to the eukaryotic ribosomal protein eL24 family. As to quaternary structure, associated with nucleolar and cytoplasmic pre-60S particles. At the end of biogenesis it dissociates from cytoplasmic pre-60S particles and is likely to be exchanged for its ribosomal homolog, RPL24.

It is found in the nucleus. It localises to the nucleolus. Involved in the biogenesis of the 60S ribosomal subunit. Ensures the docking of GTPBP4/NOG1 to pre-60S particles. This chain is Probable ribosome biogenesis protein RLP24 (Rsl24d1), found in Rattus norvegicus (Rat).